Reading from the N-terminus, the 507-residue chain is Trigger factor (507 aa).

The PPIase FKBP-type domain maps to 162 to 243 (GDFVSLDLSA…VRGVKEKELP (82 aa)). The disordered stretch occupies residues 434–507 (NLPRRPSGEA…DSELPASETK (74 aa)). Acidic residues predominate over residues 442–460 (EAEDDVRDISDELDAEELE). A compositionally biased stretch (low complexity) spans 461–488 (VPAAAPSAEVTAAAGDEATATATATDAD).

Belongs to the FKBP-type PPIase family. Tig subfamily.

The protein resides in the cytoplasm. The catalysed reaction is [protein]-peptidylproline (omega=180) = [protein]-peptidylproline (omega=0). Functionally, involved in protein export. Acts as a chaperone by maintaining the newly synthesized protein in an open conformation. Functions as a peptidyl-prolyl cis-trans isomerase. In Parafrankia sp. (strain EAN1pec), this protein is Trigger factor.